We begin with the raw amino-acid sequence, 1481 residues long: DNA excision repair protein ERCC-6 (1481 aa).

Residues 1 to 506 form an N-terminal domain; essential for its chromatin remodeling activity region; that stretch reads MFHEEVPNST…GFLFKKLFKY (506 aa). Residue serine 158 is modified to Phosphoserine; by CDK2. At lysine 170 the chain carries N6-methylated lysine; by EHMT2. Lysine 256 is covalently cross-linked (Glycyl lysine isopeptide (Lys-Gly) (interchain with G-Cter in SUMO2)). Lysine 298 is modified (N6-methylated lysine; by EHMT2). The interval 309-452 is disordered; the sequence is AIETKADQRS…RKVARRQDDG (144 aa). Over residues 327-337 the composition is skewed to basic residues; sequence RLKKHSRKLQR. Residues 353-363 show a composition bias toward basic and acidic residues; it reads KPLEPEVRPEA. 2 stretches are compositionally biased toward acidic residues: residues 378–390 and 420–435; these read DGEE…EEEG and EIDD…EDEA. Serine 428 and serine 429 each carry phosphoserine. The residue at position 444 (lysine 444) is an N6-methylated lysine; by EHMT2. Serine 482 and serine 485 each carry phosphoserine. The Helicase ATP-binding domain maps to 515–691; that stretch reads WELHCQQAGG…WSLFDFIFPG (177 aa). Residue 528–535 coordinates ATP; the sequence is DEMGLGKT. The DEAH box motif lies at 642 to 645; it reads DEGH. In terms of domain architecture, Helicase C-terminal spans 839–998; that stretch reads VVESLLKIWH…RRFFKSNDLY (160 aa). Disordered regions lie at residues 1040–1096, 1114–1238, and 1307–1372; these read LGTD…NRAS, SVMS…DRSS, and GHRG…GAPS. Residue lysine 1047 is modified to N6-methylated lysine; by EHMT2. Polar residues predominate over residues 1138 to 1147; sequence ASTSEKQGSS. Residues 1192–1201 show a composition bias toward basic residues; sequence QPKQKAKNSK. The segment covering 1202–1212 has biased composition (basic and acidic residues); it reads HCRDAKFEGTR. Polar residues predominate over residues 1330 to 1345; that stretch reads LPVQHPSSLTEKTQNN. Residues 1346–1364 are compositionally biased toward basic and acidic residues; the sequence is MKKEGKAHTPEHFSGKEDG. The short motif at 1373–1385 is the CSA-interacting motif (CIM) element; sequence SSSLLARMRARNH. Residues 1387–1416 form a ubiquitin-binding domain (UBD) region; the sequence is ILPERLESDSEHLAEAAAVPPCGTEHDDLL. Residues 1417-1481 form a winged-helix domain (WHD) region; sequence VDMRNFIAFQ…GIWKLKPEYC (65 aa). The interval 1434–1481 is essential for its interaction with RNA polymerase II, transcription-coupled nucleotide excision repair activity, association with chromatin after UV irradiation and for mediating the UV-induced translocation of ERRC8 to the nuclear matrix; sequence STQEILQEFESKLSVAQSCVFRELLRNLCNFHRTPGGEGIWKLKPEYC.

The protein belongs to the SNF2/RAD54 helicase family. As to quaternary structure, homodimer. Binds DNA. Interacts with ERCC8. Interacts with RNA polymerase II; interaction is enhanced by UV irradiation. Component of the B-WICH complex, at least composed of SMARCA5/SNF2H, BAZ1B/WSTF, SF3B1, DEK, MYO1C, ERCC6, MYBBP1A and DDX21. Interacts with KIAA1530/UVSSA. Interacts with ELOA and CUL5; the interaction is induced by DNA damaging agents or by inhibitors of RNA polymerase II elongation. Interacts (via WHD region) with RIF1. Interacts with SMARCC2/BAF170, SMARCB1/BAF47 and the neuron-specific chromatin remodeling complex (nBAF complex). Interacts with ERCC5/XPG (via C-terminus); the interaction stimulates ERCC6/CSB binding to DNA repair bubble and ERCC6/CSB ATPase activity. May form a complex composed of RNA polymerase II, ERCC6/CSB and ERCC5/XPG which associates with the DNA repair bubble during transcription-coupled nucleotide excision repair. Interacts with CAND1, CSTF1, DDX3X, DDX5, DDX17, DDX23, DHX36, HDAC1, HNRNPU, MTA2, PRPF3, PSMD3, RBBP4, SFPQ, SMARCA1, SMARCA2, TOP1, USP7 and XRCC5. Phosphorylated in a cell cycle-dependent manner at Ser-158 by cyclin A-CDK2 in response to DNA damage. Phosphorylation at this site promotes the intramolecular interaction of the N-terminal domain with the helicase ATP-binding domain, thereby probably releasing the inhibitory effect of the N-terminal domain on its ATPase activity. Phosphorylation is essential for its chromatin remodeling activity. In terms of processing, ubiquitinated at the C-terminus. Ubiquitination by the CSA complex leads to ERCC6 proteasomal degradation in a UV-dependent manner. Stabilized following interaction with KIAA1530/UVSSA, which promotes recruitment of deubiquitinating enzyme USP7, leading to deubiquitination of ERCC6 thereby preventing UV-induced degradation of ERCC6 by the proteasome.

It localises to the nucleus. It is found in the chromosome. The catalysed reaction is ATP + H2O = ADP + phosphate + H(+). In terms of biological role, essential factor involved in transcription-coupled nucleotide excision repair (TC-NER), a process during which RNA polymerase II-blocking lesions are rapidly removed from the transcribed strand of active genes. Plays a central role in the initiation of the TC-NER process: specifically recognizes and binds RNA polymerase II stalled at a lesion, and mediates recruitment of ERCC8/CSA, initiating DNA damage excision by TFIIH recruitment. Upon DNA-binding, it locally modifies DNA conformation by wrapping the DNA around itself, thereby modifying the interface between stalled RNA polymerase II and DNA. Acts as a chromatin remodeler at DSBs; DNA-dependent ATPase-dependent activity is essential for this function. Plays an important role in regulating the choice of the DNA double-strand breaks (DSBs) repair pathway and G2/M checkpoint activation; DNA-dependent ATPase activity is essential for this function. Regulates the DNA repair pathway choice by inhibiting non-homologous end joining (NHEJ), thereby promoting the homologous recombination (HR)-mediated repair of DSBs during the S/G2 phases of the cell cycle. Mediates the activation of the ATM- and CHEK2-dependent DNA damage responses thus preventing premature entry of cells into mitosis following the induction of DNA DSBs. Remodels chromatin by evicting histones from chromatin flanking DSBs, limiting RIF1 accumulation at DSBs thereby promoting BRCA1-mediated HR. Required for stable recruitment of ELOA and CUL5 to DNA damage sites. Also involved in UV-induced translocation of ERCC8 to the nuclear matrix. Essential for neuronal differentiation and neuritogenesis; regulates transcription and chromatin remodeling activities required during neurogenesis. In Mus musculus (Mouse), this protein is DNA excision repair protein ERCC-6 (Ercc6).